The following is a 94-amino-acid chain: Large ribosomal subunit protein bL25 (94 aa).

This sequence belongs to the bacterial ribosomal protein bL25 family. Part of the 50S ribosomal subunit; part of the 5S rRNA/L5/L18/L25 subcomplex. Contacts the 5S rRNA. Binds to the 5S rRNA independently of L5 and L18.

Its function is as follows. This is one of the proteins that binds to the 5S RNA in the ribosome where it forms part of the central protuberance. The chain is Large ribosomal subunit protein bL25 from Proteus mirabilis (strain HI4320).